The following is a 334-amino-acid chain: Replication factor C subunit 4 (334 aa).

55-62 (GPPGTGKT) contributes to the ATP binding site.

The protein belongs to the activator 1 small subunits family. Heteropentamer of various rfc subunits that forms a complex (RFC) with PCNA in the presence of ATP.

The protein localises to the nucleus. The elongation of primed DNA templates by DNA polymerase delta and epsilon requires the action of the accessory proteins PCNA and activator 1. This subunit may be involved in the elongation of the multiprimed DNA template. This is Replication factor C subunit 4 (rfc-4) from Caenorhabditis elegans.